Consider the following 499-residue polypeptide: NAD(P)H-quinone oxidoreductase chain 4, chloroplastic (499 aa).

14 consecutive transmembrane segments (helical) span residues 4 to 24 (FPWL…IPFL), 31 to 51 (IIRW…TYIF), 87 to 107 (IGLI…AWPV), 113 to 133 (LFYF…ASQD), 134 to 154 (ILLF…LLAM), 167 to 187 (FILY…IMAF), 211 to 231 (IIIY…IPFH), 242 to 262 (HYST…YGLI), 274 to 294 (SFFA…AALT), 310 to 330 (VSHM…GLNG), 331 to 351 (AILQ…LAGI), 385 to 405 (SLAL…LGVI), 416 to 436 (IIII…LLSM), and 462 to 482 (IFIL…PNFV).

The protein belongs to the complex I subunit 4 family.

It is found in the plastid. The protein localises to the chloroplast thylakoid membrane. It catalyses the reaction a plastoquinone + NADH + (n+1) H(+)(in) = a plastoquinol + NAD(+) + n H(+)(out). The catalysed reaction is a plastoquinone + NADPH + (n+1) H(+)(in) = a plastoquinol + NADP(+) + n H(+)(out). The protein is NAD(P)H-quinone oxidoreductase chain 4, chloroplastic (ndhD) of Marchantia polymorpha (Common liverwort).